A 119-amino-acid chain; its full sequence is Small ribosomal subunit protein bS16 (119 aa).

Belongs to the bacterial ribosomal protein bS16 family.

This chain is Small ribosomal subunit protein bS16, found in Chlamydia abortus (strain DSM 27085 / S26/3) (Chlamydophila abortus).